Consider the following 137-residue polypeptide: Large ribosomal subunit protein uL13 (137 aa).

The protein belongs to the universal ribosomal protein uL13 family. In terms of assembly, part of the 50S ribosomal subunit.

This protein is one of the early assembly proteins of the 50S ribosomal subunit, although it is not seen to bind rRNA by itself. It is important during the early stages of 50S assembly. This Methanocaldococcus jannaschii (strain ATCC 43067 / DSM 2661 / JAL-1 / JCM 10045 / NBRC 100440) (Methanococcus jannaschii) protein is Large ribosomal subunit protein uL13.